The sequence spans 339 residues: Polyhydroxybutyrate depolymerase (339 aa).

Positions 1 to 20 (MFDSVKIAWLVALGAAQVAA) are cleaved as a signal peptide. The active site involves Ser-39. A disulfide bridge links Cys-70 with Cys-79. The active site involves Asp-121. Asn-144 carries an N-linked (GlcNAc...) asparagine glycan. His-155 is a catalytic residue. Cystine bridges form between Cys-169-Cys-180, Cys-234-Cys-241, and Cys-250-Cys-304. Residue Trp-307 coordinates (3R)-hydroxybutanoate trimer.

The protein belongs to the carbohydrate esterase 1 (CE1) family.

It localises to the secreted. It catalyses the reaction [(3R)-hydroxybutanoate](n) + H2O = [(3R)-hydroxybutanoate](n-1) + (R)-3-hydroxybutanoate + H(+). Its activity is regulated as follows. The enzyme is completely inhibited by dithiothreitol (DTT) and diisopropylfluorophosphate (DFP), and partially inhibited by HgCl(2) and by enzyme3-(p-nitrophenoxy)propane (EPNP). Activity is not affected by N-ethylmaleimide (NEM) or phenylmethylsulfonyl fluoride (PMSF). In terms of biological role, esterase involved in the hydrolysis of polyhydroxybutyrate, a microbial polyester that can be produced from renewable resources. The chain is Polyhydroxybutyrate depolymerase from Talaromyces funiculosus (Fruitlet core rot fungus).